Reading from the N-terminus, the 1133-residue chain is Exportin-4 (1133 aa).

This sequence belongs to the exportin family. Interacts with Ran and cargo proteins in a GTP-dependent manner.

The protein localises to the cytoplasm. It localises to the nucleus. Its function is as follows. Mediates the nuclear export of proteins (cargos). In the nucleus binds cooperatively to its cargo and to the GTPase Ran in its active GTP-bound form. Docking of this trimeric complex to the nuclear pore complex (NPC) is mediated through binding to nucleoporins. Upon transit of a nuclear export complex into the cytoplasm, disassembling of the complex and hydrolysis of Ran-GTP to Ran-GDP cause release of the cargo from the export receptor. Xpo4 then return to the nuclear compartment and mediate another round of transport. The directionality of nuclear export is thought to be conferred by an asymmetric distribution of the GTP- and GDP-bound forms of Ran between the cytoplasm and nucleus. The chain is Exportin-4 (xpo4) from Dictyostelium discoideum (Social amoeba).